A 176-amino-acid chain; its full sequence is Inner membrane-spanning protein YciB (176 aa).

The next 6 helical transmembrane spans lie at 3 to 23 (FLFD…WGIF), 24 to 44 (TATA…AFRH), 49 to 69 (TMLW…LVLH), 81 to 101 (LYWL…NNLI), 119 to 139 (LNVA…YVVH), and 149 to 169 (FKLF…SLWL).

This sequence belongs to the YciB family.

Its subcellular location is the cell inner membrane. In terms of biological role, plays a role in cell envelope biogenesis, maintenance of cell envelope integrity and membrane homeostasis. The chain is Inner membrane-spanning protein YciB from Burkholderia ambifaria (strain MC40-6).